A 316-amino-acid chain; its full sequence is MQDWLTALPKAELHIHLEGALEPELLFALAQRNGVTLPWPDIDALRQAYQYQNLQEFLDLYYQGAHVLRTEQDFYDLTWAYLRKCAEQGVTHTEPFFDPQTHTDRGVPFQVVLSGIQAALADGRRDLGIQSGLILSFLRHLPEEAAMRTLDEALPYRDAFIAVGLDSSEAGFPPRLFERVFARARAEGLPAVAHAGEEGPPEYIWEALERLQVKRIDHGVRAWEDPRLIAHLVDTQIPLTVCPLSNVRLQVFEHMGQHNVLEMLERGLNVCINSDDPAYFGGYVLENFMALREHLGMSQEQARRLAANSLASVLTA.

Zn(2+)-binding residues include His-14, His-16, and His-194. The Proton donor role is filled by Glu-197. Asp-275 serves as a coordination point for Zn(2+). Asp-276 serves as a coordination point for substrate.

This sequence belongs to the metallo-dependent hydrolases superfamily. Adenosine and AMP deaminases family. Adenine deaminase type 2 subfamily. Zn(2+) is required as a cofactor.

It catalyses the reaction adenine + H2O + H(+) = hypoxanthine + NH4(+). Functionally, catalyzes the hydrolytic deamination of adenine to hypoxanthine. Plays an important role in the purine salvage pathway and in nitrogen catabolism. This chain is Adenine deaminase, found in Bordetella avium (strain 197N).